A 560-amino-acid polypeptide reads, in one-letter code: Membrane protein insertase YidC (560 aa).

6 consecutive transmembrane segments (helical) span residues 5–25 (IINL…WQYF), 334–354 (AIDF…MNFF), 357–377 (YVGN…LLMF), 431–451 (LPIL…YVTI), 476–496 (LFGL…WPIL), and 522–542 (FMPL…LIYW).

Belongs to the OXA1/ALB3/YidC family. Type 1 subfamily. Interacts with the Sec translocase complex via SecD. Specifically interacts with transmembrane segments of nascent integral membrane proteins during membrane integration.

It localises to the cell inner membrane. In terms of biological role, required for the insertion and/or proper folding and/or complex formation of integral membrane proteins into the membrane. Involved in integration of membrane proteins that insert both dependently and independently of the Sec translocase complex, as well as at least some lipoproteins. Aids folding of multispanning membrane proteins. The polypeptide is Membrane protein insertase YidC (Rickettsia prowazekii (strain Madrid E)).